The chain runs to 822 residues: Ras GTPase-activating-like protein rgaA (822 aa).

Residues 1-36 (MNKEEYSDISDSESEEVHETNNHNEHEHEEEDDTPE) are disordered. Over residues 15–27 (EEVHETNNHNEHE) the composition is skewed to basic and acidic residues. Residues 104 to 152 (EDKESDWIAEIQELKRNLVSEVRRNHTLERDLNRLDKRIALLIKNRGNI) are a coiled coil. Residues 161–822 (GLKAPKHKGD…IHLLNKLFLY (662 aa)) form a required for interaction to rac1A region. The Ras-GAP domain occupies 234 to 477 (FLLLSLYRLS…GDIKNYLQEI (244 aa)).

As to quaternary structure, heterotetramer. Quaternary complex with activated rac1A, ctxA and ctxB. Interacts directly with rac1A and ctxA. Preferentially interacts with activated forms of rac1A, rac1B and rac1C. Interacts with racE.

Its subcellular location is the cytoplasm. It is found in the cell cortex. The protein resides in the cleavage furrow. In terms of biological role, part of signaling pathway that is required for completion of cytokinesis. gapA and rgaA control cortexillin localization to the cleavage furrow and hence may be involved in cleavage of the midbody in the final stage of cytokinesis by regulating the actin cytoskeleton. Forms a complex by linking activated rac1A to ctxA. Assembly of this complex is necessary for the recruitment of cortexillin to the midzone of a dividing cell. Overexpression leads to the suppression of the formation of cellular projections containing F-actin and to a defect in cytokinesis. This chain is Ras GTPase-activating-like protein rgaA (rgaA), found in Dictyostelium discoideum (Social amoeba).